Reading from the N-terminus, the 111-residue chain is PHD finger-like domain-containing protein 5A (111 aa).

Belongs to the PHF5 family.

This is PHD finger-like domain-containing protein 5A from Drosophila melanogaster (Fruit fly).